We begin with the raw amino-acid sequence, 208 residues long: Glycerol-3-phosphate acyltransferase (208 aa).

The next 5 helical transmembrane spans lie at 3 to 23 (ILLA…VVVS), 51 to 71 (KAAI…VWLA), 78 to 98 (DVAI…PVFF), 115 to 135 (AVHP…AFFF), and 140 to 160 (LAAL…FGMP).

This sequence belongs to the PlsY family. Probably interacts with PlsX.

Its subcellular location is the cell inner membrane. The catalysed reaction is an acyl phosphate + sn-glycerol 3-phosphate = a 1-acyl-sn-glycero-3-phosphate + phosphate. It functions in the pathway lipid metabolism; phospholipid metabolism. Functionally, catalyzes the transfer of an acyl group from acyl-phosphate (acyl-PO(4)) to glycerol-3-phosphate (G3P) to form lysophosphatidic acid (LPA). This enzyme utilizes acyl-phosphate as fatty acyl donor, but not acyl-CoA or acyl-ACP. This is Glycerol-3-phosphate acyltransferase from Burkholderia orbicola (strain MC0-3).